The sequence spans 66 residues: Large ribosomal subunit protein uL29 (66 aa).

The protein belongs to the universal ribosomal protein uL29 family.

This Thermotoga sp. (strain RQ2) protein is Large ribosomal subunit protein uL29.